Reading from the N-terminus, the 341-residue chain is MAKLDFITLGIESSCDETGVGLYHSELGLIGHKLFSSVEIHSEYGGVVPELASRDHIQRVLPLIKTVLTNAKFTLQDLSGIAYTAGPGLAGALLVGSALAKSLAWSLGVPSLAVHHMEGHLLAPLLEESQPKFPFVALLVSGGHTMLIDVKAIGQYKILGKSLDDAVGEAFDKTAKILGLGYPGGPALEMLAKQGDTNTFKFPLPMVNRPGLDFSFSGLKTFARNTFTKHPNKKSDIAKAFEVATTQILMIKCRRALEKTGRITLVVAGGVSANLSLRSELNQMGRKVGVNIFYPRQEFCTDNGAMIALAGHFRLSDGQCDTNYEINIKPRWNIEELSQIK.

Residues His-116 and His-120 each contribute to the Fe cation site. Substrate is bound by residues Leu-139–Gly-143, Asp-172, Gly-185, and Asn-274. Asp-302 contributes to the Fe cation binding site.

The protein belongs to the KAE1 / TsaD family. Requires Fe(2+) as cofactor.

It localises to the cytoplasm. The catalysed reaction is L-threonylcarbamoyladenylate + adenosine(37) in tRNA = N(6)-L-threonylcarbamoyladenosine(37) in tRNA + AMP + H(+). Required for the formation of a threonylcarbamoyl group on adenosine at position 37 (t(6)A37) in tRNAs that read codons beginning with adenine. Is involved in the transfer of the threonylcarbamoyl moiety of threonylcarbamoyl-AMP (TC-AMP) to the N6 group of A37, together with TsaE and TsaB. TsaD likely plays a direct catalytic role in this reaction. The sequence is that of tRNA N6-adenosine threonylcarbamoyltransferase from Vesicomyosocius okutanii subsp. Calyptogena okutanii (strain HA).